A 253-amino-acid polypeptide reads, in one-letter code: uncharacterized protein (253 aa).

This is an uncharacterized protein from Ostreid herpesvirus 1 (isolate France) (OsHV-1).